The following is a 202-amino-acid chain: MNYKDIINACILSGVFLLHSPSALADTPSVGVSKGQESLQPAAEGNLWQRLIRNVSLAWNSPHQELYIPVNTWHNRWTYDDEKIASYNERPWGVGYGKYRYDEDNNWHSVYAMAFMDSHNRVEPILGYGYQKMWIPGEREGWRFGAGFTASITARYEYHYIPLPLPLPLISIEYNRLSLQTTYIPGTYNNGNVLFTWIRWQF.

Positions 1–25 (MNYKDIINACILSGVFLLHSPSALA) are cleaved as a signal peptide. Active-site residues include histidine 74, aspartate 117, and serine 118.

This sequence belongs to the lipid A palmitoyltransferase family. As to quaternary structure, homodimer.

It localises to the cell outer membrane. It carries out the reaction a lipid A + a 1,2-diacyl-sn-glycero-3-phosphocholine = a hepta-acyl lipid A + a 2-acyl-sn-glycero-3-phosphocholine. It catalyses the reaction a lipid IVA + a 1,2-diacyl-sn-glycero-3-phosphocholine = a lipid IVB + a 2-acyl-sn-glycero-3-phosphocholine. The catalysed reaction is a lipid IIA + a 1,2-diacyl-sn-glycero-3-phosphocholine = a lipid IIB + a 2-acyl-sn-glycero-3-phosphocholine. In terms of biological role, transfers a fatty acid residue from the sn-1 position of a phospholipid to the N-linked hydroxyfatty acid chain on the proximal unit of lipid A or its precursors. In Yersinia pseudotuberculosis serotype IB (strain PB1/+), this protein is Lipid A acyltransferase PagP.